Consider the following 627-residue polypeptide: 1-deoxy-D-xylulose-5-phosphate synthase (627 aa).

Thiamine diphosphate-binding positions include His87 and 128–130 (GHS). Position 159 (Asp159) interacts with Mg(2+). Thiamine diphosphate-binding positions include 160–161 (GA), Asn188, Phe295, and Glu375. Position 188 (Asn188) interacts with Mg(2+).

Belongs to the transketolase family. DXPS subfamily. As to quaternary structure, homodimer. Mg(2+) serves as cofactor. Thiamine diphosphate is required as a cofactor.

It catalyses the reaction D-glyceraldehyde 3-phosphate + pyruvate + H(+) = 1-deoxy-D-xylulose 5-phosphate + CO2. It functions in the pathway metabolic intermediate biosynthesis; 1-deoxy-D-xylulose 5-phosphate biosynthesis; 1-deoxy-D-xylulose 5-phosphate from D-glyceraldehyde 3-phosphate and pyruvate: step 1/1. In terms of biological role, catalyzes the acyloin condensation reaction between C atoms 2 and 3 of pyruvate and glyceraldehyde 3-phosphate to yield 1-deoxy-D-xylulose-5-phosphate (DXP). The chain is 1-deoxy-D-xylulose-5-phosphate synthase from Pseudomonas aeruginosa (strain LESB58).